The chain runs to 503 residues: ATP synthase subunit alpha (503 aa).

170-177 (GDKQTGKT) is a binding site for ATP.

Belongs to the ATPase alpha/beta chains family. As to quaternary structure, F-type ATPases have 2 components, CF(1) - the catalytic core - and CF(0) - the membrane proton channel. CF(1) has five subunits: alpha(3), beta(3), gamma(1), delta(1), epsilon(1). CF(0) has three main subunits: a(1), b(2) and c(9-12). The alpha and beta chains form an alternating ring which encloses part of the gamma chain. CF(1) is attached to CF(0) by a central stalk formed by the gamma and epsilon chains, while a peripheral stalk is formed by the delta and b chains.

The protein resides in the cell inner membrane. It catalyses the reaction ATP + H2O + 4 H(+)(in) = ADP + phosphate + 5 H(+)(out). Functionally, produces ATP from ADP in the presence of a proton gradient across the membrane. The alpha chain is a regulatory subunit. The protein is ATP synthase subunit alpha of Helicobacter pylori (strain HPAG1).